Here is a 128-residue protein sequence, read N- to C-terminus: MNFIKEFREFAMRGNVVDMAIGVIIGSAFGKIVSSLVSDIFTPVLGILTGGIDFKDMKFVLAQAQGDVPAVTLNYGLFIQNVIDFIIIAFAIFMMIKVINKVRKPEEKKTAPKAETLLTEIRDLLKNK.

2 consecutive transmembrane segments (helical) span residues 10–30 (FAMRGNVVDMAIGVIIGSAFG) and 76–96 (GLFIQNVIDFIIIAFAIFMMI).

It belongs to the MscL family. In terms of assembly, homopentamer.

The protein localises to the cell inner membrane. Functionally, channel that opens in response to stretch forces in the membrane lipid bilayer. May participate in the regulation of osmotic pressure changes within the cell. This chain is Large-conductance mechanosensitive channel, found in Haemophilus influenzae (strain 86-028NP).